A 107-amino-acid polypeptide reads, in one-letter code: NADH-quinone oxidoreductase subunit K 2 (107 aa).

Helical transmembrane passes span 3-23 (LPIYYPLGLGALLFGLGLWGA), 30-50 (VRILMFIEIMLNGVNLNLITF), and 67-87 (ILTLFVMTVAAAEASVGLAII).

This sequence belongs to the complex I subunit 4L family. As to quaternary structure, NDH-1 is composed of 14 different subunits. Subunits NuoA, H, J, K, L, M, N constitute the membrane sector of the complex.

It localises to the cell membrane. It carries out the reaction a quinone + NADH + 5 H(+)(in) = a quinol + NAD(+) + 4 H(+)(out). Its function is as follows. NDH-1 shuttles electrons from NADH, via FMN and iron-sulfur (Fe-S) centers, to quinones in the respiratory chain. The immediate electron acceptor for the enzyme in this species is believed to be a menaquinone. Couples the redox reaction to proton translocation (for every two electrons transferred, four hydrogen ions are translocated across the cytoplasmic membrane), and thus conserves the redox energy in a proton gradient. The polypeptide is NADH-quinone oxidoreductase subunit K 2 (Symbiobacterium thermophilum (strain DSM 24528 / JCM 14929 / IAM 14863 / T)).